An 867-amino-acid chain; its full sequence is Protein translocase subunit SecA (867 aa).

ATP-binding positions include Gln-86, 104-108 (GEGKT), and Asp-499. Residues Cys-848, Cys-850, Cys-859, and His-860 each contribute to the Zn(2+) site.

This sequence belongs to the SecA family. In terms of assembly, monomer and homodimer. Part of the essential Sec protein translocation apparatus which comprises SecA, SecYEG and auxiliary proteins SecDF-YajC and YidC. The cofactor is Zn(2+).

Its subcellular location is the cell membrane. It is found in the cytoplasm. The enzyme catalyses ATP + H2O + cellular proteinSide 1 = ADP + phosphate + cellular proteinSide 2.. Functionally, part of the Sec protein translocase complex. Interacts with the SecYEG preprotein conducting channel. Has a central role in coupling the hydrolysis of ATP to the transfer of proteins into and across the cell membrane, serving both as a receptor for the preprotein-SecB complex and as an ATP-driven molecular motor driving the stepwise translocation of polypeptide chains across the membrane. The sequence is that of Protein translocase subunit SecA from Wolbachia sp. subsp. Brugia malayi (strain TRS).